The sequence spans 310 residues: L-lactate dehydrogenase (310 aa).

NAD(+)-binding positions include Val-11, Asp-32, Tyr-62, and 76–77; that span reads GV. Substrate is bound by residues Gln-79, Arg-85, and 117–120; that span reads NPVD. Residues 115–117 and Ser-140 each bind NAD(+); that span reads ATN. 145 to 148 lines the substrate pocket; that stretch reads DTAR. Arg-150 and His-165 together coordinate beta-D-fructose 1,6-bisphosphate. Residue His-172 is the Proton acceptor of the active site. Residue Tyr-218 is modified to Phosphotyrosine. Thr-227 contacts substrate.

It belongs to the LDH/MDH superfamily. LDH family. In terms of assembly, homotetramer.

It is found in the cytoplasm. The enzyme catalyses (S)-lactate + NAD(+) = pyruvate + NADH + H(+). The protein operates within fermentation; pyruvate fermentation to lactate; (S)-lactate from pyruvate: step 1/1. Its activity is regulated as follows. Allosterically activated by fructose 1,6-bisphosphate (FBP). Catalyzes the conversion of lactate to pyruvate. This chain is L-lactate dehydrogenase, found in Thermus thermophilus (strain ATCC BAA-163 / DSM 7039 / HB27).